The primary structure comprises 79 residues: ATP synthase subunit c (79 aa).

The next 2 helical transmembrane spans lie at 11–31 (IAVA…IGIL) and 59–79 (LVDA…FAVI).

This sequence belongs to the ATPase C chain family. F-type ATPases have 2 components, F(1) - the catalytic core - and F(0) - the membrane proton channel. F(1) has five subunits: alpha(3), beta(3), gamma(1), delta(1), epsilon(1). F(0) has three main subunits: a(1), b(2) and c(10-14). The alpha and beta chains form an alternating ring which encloses part of the gamma chain. F(1) is attached to F(0) by a central stalk formed by the gamma and epsilon chains, while a peripheral stalk is formed by the delta and b chains.

Its subcellular location is the cell membrane. Functionally, f(1)F(0) ATP synthase produces ATP from ADP in the presence of a proton or sodium gradient. F-type ATPases consist of two structural domains, F(1) containing the extramembraneous catalytic core and F(0) containing the membrane proton channel, linked together by a central stalk and a peripheral stalk. During catalysis, ATP synthesis in the catalytic domain of F(1) is coupled via a rotary mechanism of the central stalk subunits to proton translocation. Key component of the F(0) channel; it plays a direct role in translocation across the membrane. A homomeric c-ring of between 10-14 subunits forms the central stalk rotor element with the F(1) delta and epsilon subunits. In Buchnera aphidicola subsp. Baizongia pistaciae (strain Bp), this protein is ATP synthase subunit c.